A 139-amino-acid polypeptide reads, in one-letter code: Transmembrane protein 250 (139 aa).

2 helical membrane passes run 56–76 (FLLYFSCSLFTAALWGALAAL) and 116–136 (VYGIHVTMLLVGGLGWCFMVF).

In terms of assembly, (Microbial infection) Interacts with herpes simplex virus 1/HHV-1 protein CVC2/UL25.

It is found in the membrane. The protein resides in the nucleus. The protein localises to the cytoplasm. May play a role in cell proliferation by promoting progression into S phase. Its function is as follows. (Microbial infection) Promotes human herpes simplex virus 1/HHV-1 proliferation. The sequence is that of Transmembrane protein 250 from Homo sapiens (Human).